The primary structure comprises 175 residues: Adenine phosphoribosyltransferase (175 aa).

The protein belongs to the purine/pyrimidine phosphoribosyltransferase family. Homodimer.

It localises to the cytoplasm. The catalysed reaction is AMP + diphosphate = 5-phospho-alpha-D-ribose 1-diphosphate + adenine. It functions in the pathway purine metabolism; AMP biosynthesis via salvage pathway; AMP from adenine: step 1/1. In terms of biological role, catalyzes a salvage reaction resulting in the formation of AMP, that is energically less costly than de novo synthesis. The sequence is that of Adenine phosphoribosyltransferase from Francisella tularensis subsp. tularensis (strain FSC 198).